The sequence spans 247 residues: Geranylgeranylglyceryl phosphate synthase (247 aa).

Residues Asp-23 and Ser-52 each coordinate Mg(2+). Residues 171-177 (YLEAGSG), 203-204 (GG), and 225-226 (GT) each bind sn-glycerol 1-phosphate.

This sequence belongs to the GGGP/HepGP synthase family. Group II subfamily. Mg(2+) serves as cofactor.

Its subcellular location is the cytoplasm. The catalysed reaction is sn-glycerol 1-phosphate + (2E,6E,10E)-geranylgeranyl diphosphate = sn-3-O-(geranylgeranyl)glycerol 1-phosphate + diphosphate. Its pathway is membrane lipid metabolism; glycerophospholipid metabolism. In terms of biological role, prenyltransferase that catalyzes the transfer of the geranylgeranyl moiety of geranylgeranyl diphosphate (GGPP) to the C3 hydroxyl of sn-glycerol-1-phosphate (G1P). This reaction is the first ether-bond-formation step in the biosynthesis of archaeal membrane lipids. The protein is Geranylgeranylglyceryl phosphate synthase of Methanosarcina acetivorans (strain ATCC 35395 / DSM 2834 / JCM 12185 / C2A).